The primary structure comprises 295 residues: Nucleotide-binding protein MCA0739 (295 aa).

Residue 8–15 participates in ATP binding; it reads GFSGSGKS. 60 to 63 is a binding site for GTP; the sequence is DARN.

It belongs to the RapZ-like family.

Displays ATPase and GTPase activities. The chain is Nucleotide-binding protein MCA0739 from Methylococcus capsulatus (strain ATCC 33009 / NCIMB 11132 / Bath).